Here is a 931-residue protein sequence, read N- to C-terminus: Neuropilin-2 (931 aa).

The or 22 signal peptide spans 1–20; the sequence is MDMFPLTWVFLALYFSRHQV. Residues 21-864 lie on the Extracellular side of the membrane; it reads RGQPDPPCGG…EKSWLYTLDP (844 aa). Intrachain disulfides connect cysteine 28–cysteine 55, cysteine 83–cysteine 105, and cysteine 149–cysteine 175. CUB domains follow at residues 28–142 and 149–267; these read CGGR…YEIF and CSKN…YYLV. Asparagine 152 and asparagine 157 each carry an N-linked (GlcNAc...) asparagine glycan. Ca(2+)-binding residues include glutamate 197, aspartate 211, and aspartate 252. Cysteine 208 and cysteine 230 are joined by a disulfide. Cystine bridges form between cysteine 277/cysteine 427 and cysteine 434/cysteine 592. 2 consecutive F5/8 type C domains span residues 277-427 and 434-592; these read CNVP…LFGC and CSNM…VLGC. Residues 298 to 310 show a composition bias toward polar residues; it reads TYSDGRWTPQQSR. Residues 298–317 are disordered; sequence TYSDGRWTPQQSRLHGDDNG. The interval 601-622 is disordered; it reads VETLGPTVKSEETTTPYPTEEE. Asparagine 629 carries N-linked (GlcNAc...) asparagine glycosylation. The 161-residue stretch at 642–802 folds into the MAM domain; sequence SGFNCNFDFL…TDVPLENCME (161 aa). The N-linked (GlcNAc...) asparagine glycan is linked to asparagine 839. Residues 865 to 889 form a helical membrane-spanning segment; the sequence is ILITIIAMSSLGVLLGATCAGLLLY. The Cytoplasmic segment spans residues 890–931; sequence CTCSYSGLSSRSCTTLENYNFELYDGLKHKVKMNHQKCCSEA.

This sequence belongs to the neuropilin family. Heterodimer with NRP1. Binds PLXNB1. As to quaternary structure, (Microbial infection) Interacts with human cytomegalovirus proteins gL, UL128, UL130 and UL131A.

The protein resides in the membrane. It localises to the secreted. Its function is as follows. High affinity receptor for semaphorins 3C, 3F, VEGF-165 and VEGF-145 isoforms of VEGF, and the PLGF-2 isoform of PGF. Functionally, (Microbial infection) Acts as a receptor for human cytomegalovirus pentamer-dependent entry in epithelial and endothelial cells. The polypeptide is Neuropilin-2 (NRP2) (Homo sapiens (Human)).